The primary structure comprises 747 residues: Protein MTSS 2 (747 aa).

An IMD domain is found at 1-252; the sequence is METAEKECGA…EQVIKDLKGS (252 aa). Positions 135 to 159 form a coiled coil; it reads EIKKKSSDTLKLQKKARKELLGKGD. 3 stretches are compositionally biased toward low complexity: residues 256–284, 321–332, and 349–367; these read WSYQ…SSSS, SSVSSHDSGFVS, and TSQK…TCQS. Disordered regions lie at residues 256–302, 318–441, 457–522, and 543–599; these read WSYQ…YSPS, ARLS…EEVS, LEHQ…RNSN, and PTAG…PTVP. At Thr260 the chain carries Phosphothreonine. Residue Ser264 is modified to Phosphoserine. A compositionally biased stretch (polar residues) spans 368–378; that stretch reads VSECSSPTSDW. Over residues 397–406 the composition is skewed to basic and acidic residues; sequence DRVELLRDTE. Ser441 carries the post-translational modification Phosphoserine. The span at 466–479 shows a compositional bias: low complexity; sequence SLQYSSGYSTQTTT. Polar residues predominate over residues 480-492; that stretch reads PSCSEDTIPSQGS. Phosphoserine occurs at positions 579, 601, 612, 624, 634, and 639. Disordered regions lie at residues 638-664 and 691-720; these read LSLP…EDEQ and GQFP…DPPA. The residue at position 643 (Thr643) is a Phosphothreonine. 2 stretches are compositionally biased toward low complexity: residues 646–659 and 696–707; these read GSPS…PGAG and PTALSATPTEET. The region spanning 719 to 736 is the WH2 domain; sequence PAEDMLVAIRRGVRLRRT.

The protein belongs to the MTSS family. As to quaternary structure, interacts (via IMD domain) with RAC1; this interaction may be important to potentiate PDGF-induced RAC1 activation.

Its subcellular location is the cytoplasm. The protein localises to the cell projection. It is found in the ruffle. Its function is as follows. Involved in plasma membrane dynamics. Potentiated PDGF-mediated formation of membrane ruffles and lamellipodia in fibroblasts, acting via RAC1 activation. May function in actin bundling. This chain is Protein MTSS 2, found in Homo sapiens (Human).